Here is a 615-residue protein sequence, read N- to C-terminus: DNA mismatch repair protein MutL (615 aa).

The disordered stretch occupies residues 363–397 (FAEPAAREPVAPRYTPAPASGSRPAAPWPNAQPGY). Residues 364–391 (AEPAAREPVAPRYTPAPASGSRPAAPWP) are compositionally biased toward low complexity.

This sequence belongs to the DNA mismatch repair MutL/HexB family.

Functionally, this protein is involved in the repair of mismatches in DNA. It is required for dam-dependent methyl-directed DNA mismatch repair. May act as a 'molecular matchmaker', a protein that promotes the formation of a stable complex between two or more DNA-binding proteins in an ATP-dependent manner without itself being part of a final effector complex. This Escherichia coli (strain K12 / MC4100 / BW2952) protein is DNA mismatch repair protein MutL.